A 300-amino-acid chain; its full sequence is tRNA pseudouridine synthase B (300 aa).

Residue D38 is the Nucleophile of the active site.

Belongs to the pseudouridine synthase TruB family. Type 1 subfamily.

It catalyses the reaction uridine(55) in tRNA = pseudouridine(55) in tRNA. Responsible for synthesis of pseudouridine from uracil-55 in the psi GC loop of transfer RNAs. The chain is tRNA pseudouridine synthase B from Dehalococcoides mccartyi (strain CBDB1).